The following is a 218-amino-acid chain: Putative transposase InsD for insertion element IS2E (218 aa).

In terms of domain architecture, Integrase catalytic spans 23–206 (KPAVPPSKRA…SPREYLRQRA (184 aa)).

Its function is as follows. Involved in the transposition of the insertion sequence IS2. This chain is Putative transposase InsD for insertion element IS2E (insD8), found in Escherichia coli (strain K12).